The primary structure comprises 170 residues: M-agglutinin (170 aa).

The N-terminal stretch at 1 to 24 is a signal peptide; sequence MNLKKIAIASSVFAGITMALTCHA.

Its function is as follows. This protein is a non-fimbrial hemagglutinin that is specific for blood group M. This Escherichia coli protein is M-agglutinin (bmaE).